The chain runs to 827 residues: Lon protease (827 aa).

A disordered region spans residues 1-27 (MNDETLREQTTAESEETSPTTPSPEPE). The Lon N-terminal domain occupies 32-225 (LPLIPLEGAV…KVLMFYRKQF (194 aa)). 385-392 (GPPGVGKT) is an ATP binding site. One can recognise a Lon proteolytic domain in the interval 625 to 806 (IDQPGVAIGL…DEVLSIALLP (182 aa)). Residues serine 712 and lysine 755 contribute to the active site.

This sequence belongs to the peptidase S16 family. Homohexamer. Organized in a ring with a central cavity.

The protein localises to the cytoplasm. It carries out the reaction Hydrolysis of proteins in presence of ATP.. ATP-dependent serine protease that mediates the selective degradation of mutant and abnormal proteins as well as certain short-lived regulatory proteins. Required for cellular homeostasis and for survival from DNA damage and developmental changes induced by stress. Degrades polypeptides processively to yield small peptide fragments that are 5 to 10 amino acids long. Binds to DNA in a double-stranded, site-specific manner. The sequence is that of Lon protease from Chloroflexus aurantiacus (strain ATCC 29366 / DSM 635 / J-10-fl).